Reading from the N-terminus, the 465-residue chain is 6-phospho-beta-glucosidase (465 aa).

Residue Glu173 is the Proton donor of the active site. The Nucleophile role is filled by Glu362.

It belongs to the glycosyl hydrolase 1 family.

The enzyme catalyses 6-phospho-beta-D-glucosyl-(1-&gt;4)-D-glucose + H2O = D-glucose 6-phosphate + D-glucose. Its pathway is carbohydrate metabolism; beta-glucoside metabolism. The polypeptide is 6-phospho-beta-glucosidase (arbB) (Dickeya chrysanthemi (Pectobacterium chrysanthemi)).